Here is a 347-residue protein sequence, read N- to C-terminus: NADH-ubiquinone oxidoreductase chain 2 (347 aa).

Helical transmembrane passes span 1 to 21, 25 to 45, 59 to 79, 111 to 131, 149 to 169, 178 to 198, 201 to 221, 237 to 257, 276 to 296, and 326 to 346; these read MNPL…AIVA, HWLM…PILM, YFLT…MNLV, FHFW…LILL, INLD…GWGG, IMAY…AYNP, TLLN…MFML, MPLL…LPPL, VILP…YMRL, and LSPL…LALL.

This sequence belongs to the complex I subunit 2 family. As to quaternary structure, core subunit of respiratory chain NADH dehydrogenase (Complex I) which is composed of 45 different subunits. Interacts with TMEM242.

The protein resides in the mitochondrion inner membrane. The catalysed reaction is a ubiquinone + NADH + 5 H(+)(in) = a ubiquinol + NAD(+) + 4 H(+)(out). Its function is as follows. Core subunit of the mitochondrial membrane respiratory chain NADH dehydrogenase (Complex I) which catalyzes electron transfer from NADH through the respiratory chain, using ubiquinone as an electron acceptor. Essential for the catalytic activity and assembly of complex I. The protein is NADH-ubiquinone oxidoreductase chain 2 of Pteropus pumilus (Little golden-mantled flying fox).